The following is an 86-amino-acid chain: Cytochrome c oxidase subunit 6B1 (86 aa).

At alanine 2 the chain carries N-acetylalanine. One can recognise a CHCH domain in the interval 27-73; the sequence is TRNCWQNYLDFHRCQKAMTAKGGDISVCEWYQRVYQSLCPTSWVTDW. The short motif at 30–40 is the Cx9C motif element; that stretch reads CWQNYLDFHRC. 2 disulfide bridges follow: cysteine 30-cysteine 65 and cysteine 40-cysteine 54. The Cx10C motif signature appears at 54 to 65; sequence CEWYQRVYQSLC.

It belongs to the cytochrome c oxidase subunit 6B family. As to quaternary structure, component of the cytochrome c oxidase (complex IV, CIV), a multisubunit enzyme composed of 14 subunits. The complex is composed of a catalytic core of 3 subunits MT-CO1, MT-CO2 and MT-CO3, encoded in the mitochondrial DNA, and 11 supernumerary subunits COX4I, COX5A, COX5B, COX6A, COX6B, COX6C, COX7A, COX7B, COX7C, COX8 and NDUFA4, which are encoded in the nuclear genome. The complex exists as a monomer or a dimer and forms supercomplexes (SCs) in the inner mitochondrial membrane with NADH-ubiquinone oxidoreductase (complex I, CI) and ubiquinol-cytochrome c oxidoreductase (cytochrome b-c1 complex, complex III, CIII), resulting in different assemblies (supercomplex SCI(1)III(2)IV(1) and megacomplex MCI(2)III(2)IV(2)).

Its subcellular location is the mitochondrion inner membrane. Its pathway is energy metabolism; oxidative phosphorylation. Functionally, component of the cytochrome c oxidase, the last enzyme in the mitochondrial electron transport chain which drives oxidative phosphorylation. The respiratory chain contains 3 multisubunit complexes succinate dehydrogenase (complex II, CII), ubiquinol-cytochrome c oxidoreductase (cytochrome b-c1 complex, complex III, CIII) and cytochrome c oxidase (complex IV, CIV), that cooperate to transfer electrons derived from NADH and succinate to molecular oxygen, creating an electrochemical gradient over the inner membrane that drives transmembrane transport and the ATP synthase. Cytochrome c oxidase is the component of the respiratory chain that catalyzes the reduction of oxygen to water. Electrons originating from reduced cytochrome c in the intermembrane space (IMS) are transferred via the dinuclear copper A center (CU(A)) of subunit 2 and heme A of subunit 1 to the active site in subunit 1, a binuclear center (BNC) formed by heme A3 and copper B (CU(B)). The BNC reduces molecular oxygen to 2 water molecules using 4 electrons from cytochrome c in the IMS and 4 protons from the mitochondrial matrix. The protein is Cytochrome c oxidase subunit 6B1 (COX6B1) of Pongo abelii (Sumatran orangutan).